The primary structure comprises 137 residues: Small ribosomal subunit protein eS6 (137 aa).

Acidic residues predominate over residues 114 to 127 (LPVEEAPAEDAPES). Positions 114–137 (LPVEEAPAEDAPESAEEKSEDKKE) are disordered. Basic and acidic residues predominate over residues 128–137 (AEEKSEDKKE).

This sequence belongs to the eukaryotic ribosomal protein eS6 family.

The polypeptide is Small ribosomal subunit protein eS6 (Nitrosopumilus maritimus (strain SCM1)).